A 214-amino-acid polypeptide reads, in one-letter code: Large ribosomal subunit protein uL3 (214 aa).

N5-methylglutamine is present on glutamine 151.

The protein belongs to the universal ribosomal protein uL3 family. As to quaternary structure, part of the 50S ribosomal subunit. Forms a cluster with proteins L14 and L19. Methylated by PrmB.

In terms of biological role, one of the primary rRNA binding proteins, it binds directly near the 3'-end of the 23S rRNA, where it nucleates assembly of the 50S subunit. The chain is Large ribosomal subunit protein uL3 from Saccharophagus degradans (strain 2-40 / ATCC 43961 / DSM 17024).